Reading from the N-terminus, the 349-residue chain is uncharacterized protein (349 aa).

Residues leucine 16–leucine 36 form a helical membrane-spanning segment. The interval phenylalanine 111 to serine 139 is disordered. Residues serine 124–glutamate 134 show a composition bias toward basic and acidic residues. 3 consecutive transmembrane segments (helical) span residues isoleucine 231–tyrosine 251, valine 284–phenylalanine 304, and isoleucine 307–leucine 327.

Belongs to the ABC-4 integral membrane protein family. As to quaternary structure, the complex is composed of two ATP-binding proteins (MT0079), two transmembrane proteins (MT0078) and a solute-binding protein.

It localises to the cell membrane. Its function is as follows. Probably part of an ABC transporter complex. Probably responsible for the translocation of the substrate across the membrane. This is an uncharacterized protein from Mycobacterium tuberculosis (strain CDC 1551 / Oshkosh).